The primary structure comprises 370 residues: Luciferin sulfotransferase (370 aa).

90-95 (KAGTTW) serves as a coordination point for 3'-phosphoadenylyl sulfate. Histidine 165 serves as the catalytic Proton acceptor. 3'-phosphoadenylyl sulfate-binding positions include arginine 189, serine 197, tyrosine 250, 284–289 (LSFESM), and 316–320 (FMRSG).

Belongs to the sulfotransferase 1 family.

The catalysed reaction is firefly D-luciferin + 3'-phosphoadenylyl sulfate = firefly D-sulfoluciferin + adenosine 3',5'-bisphosphate + H(+). The enzyme catalyses firefly L-luciferin + 3'-phosphoadenylyl sulfate = firefly L-sulfoluciferin + adenosine 3',5'-bisphosphate + H(+). Sulfoluciferin formation is inhibited by the product adenosine 3',5'-bisphosphate. In terms of biological role, catalyzes the production of firefly sulfoluciferin from luciferin using the sulfo-donor 3'-phosphoadenylyl sulfate (PAPS). Is also able to catalyze the reverse reaction, i.e. the adenosine 3',5'-bisphosphate-dependent desulfonation of sulfoluciferin. Can use either D- or L-luciferin stereoisomer as substrate. Sulfoluciferin, which is not a substrate of P.pyralis luciferase, likely serves as a luciferin storage form in fireflies. This is Luciferin sulfotransferase from Photinus pyralis (Common eastern firefly).